A 98-amino-acid polypeptide reads, in one-letter code: Acylphosphatase (98 aa).

The Acylphosphatase-like domain maps to threonine 12–glutamine 98. Active-site residues include arginine 27 and asparagine 45.

The protein belongs to the acylphosphatase family.

It carries out the reaction an acyl phosphate + H2O = a carboxylate + phosphate + H(+). This chain is Acylphosphatase (acyP), found in Burkholderia cenocepacia (strain HI2424).